Reading from the N-terminus, the 338-residue chain is Ferrochelatase (338 aa).

Fe cation is bound by residues His189 and Glu294.

It belongs to the ferrochelatase family.

Its subcellular location is the cytoplasm. The enzyme catalyses heme b + 2 H(+) = protoporphyrin IX + Fe(2+). It functions in the pathway porphyrin-containing compound metabolism; protoheme biosynthesis; protoheme from protoporphyrin-IX: step 1/1. Its function is as follows. Catalyzes the ferrous insertion into protoporphyrin IX. In Pseudomonas putida (strain ATCC 47054 / DSM 6125 / CFBP 8728 / NCIMB 11950 / KT2440), this protein is Ferrochelatase.